A 418-amino-acid polypeptide reads, in one-letter code: Glutamyl-tRNA reductase (418 aa).

Residues Thr49–Arg52, Ser109, Glu114–Gln116, and Gln120 each bind substrate. The active-site Nucleophile is the Cys50. Gly189 to Ile194 contacts NADP(+).

Belongs to the glutamyl-tRNA reductase family. In terms of assembly, homodimer.

It catalyses the reaction (S)-4-amino-5-oxopentanoate + tRNA(Glu) + NADP(+) = L-glutamyl-tRNA(Glu) + NADPH + H(+). It participates in porphyrin-containing compound metabolism; protoporphyrin-IX biosynthesis; 5-aminolevulinate from L-glutamyl-tRNA(Glu): step 1/2. In terms of biological role, catalyzes the NADPH-dependent reduction of glutamyl-tRNA(Glu) to glutamate 1-semialdehyde (GSA). This chain is Glutamyl-tRNA reductase, found in Escherichia coli O127:H6 (strain E2348/69 / EPEC).